The primary structure comprises 100 residues: UPF0213 protein YhbQ (100 aa).

One can recognise a GIY-YIG domain in the interval 2–77; that stretch reads TPWFLYLIRT…KQLTKRQKER (76 aa).

Belongs to the UPF0213 family.

The polypeptide is UPF0213 protein YhbQ (Escherichia coli (strain K12 / MC4100 / BW2952)).